An 85-amino-acid chain; its full sequence is U4-theraphotoxin-Hhn1a (85 aa).

Residues 1–22 (MKVTLIAILTCAAVLVLRTTAA) form the signal peptide. Positions 23-48 (EELEAESQLMEVGMPDTELAAVDEER) are excised as a propeptide. 3 disulfide bridges follow: Cys52/Cys66, Cys56/Cys77, and Cys71/Cys82.

The protein belongs to the neurotoxin 12 (Hwtx-2) family. 02 (Hwtx-2) subfamily. Monomer. As to expression, expressed by the venom gland.

The protein resides in the secreted. Neurotoxin active on both insects and mammals. The chain is U4-theraphotoxin-Hhn1a from Cyriopagopus hainanus (Chinese bird spider).